A 439-amino-acid chain; its full sequence is Homogentisate 1,2-dioxygenase (439 aa).

Residues His-335, Glu-341, and His-371 each contribute to the Fe cation site.

It belongs to the homogentisate dioxygenase family. The cofactor is Fe cation.

It carries out the reaction homogentisate + O2 = 4-maleylacetoacetate + H(+). The protein operates within amino-acid degradation; L-phenylalanine degradation; acetoacetate and fumarate from L-phenylalanine: step 4/6. The chain is Homogentisate 1,2-dioxygenase from Drosophila melanogaster (Fruit fly).